The chain runs to 190 residues: Potassium-transporting ATPase KdpC subunit (190 aa).

Residues 10–30 (TFIFLLLITGGVYPLLTTALG) form a helical membrane-spanning segment.

The protein belongs to the KdpC family. In terms of assembly, the system is composed of three essential subunits: KdpA, KdpB and KdpC.

It localises to the cell inner membrane. Its function is as follows. Part of the high-affinity ATP-driven potassium transport (or Kdp) system, which catalyzes the hydrolysis of ATP coupled with the electrogenic transport of potassium into the cytoplasm. This subunit acts as a catalytic chaperone that increases the ATP-binding affinity of the ATP-hydrolyzing subunit KdpB by the formation of a transient KdpB/KdpC/ATP ternary complex. In Escherichia coli O157:H7, this protein is Potassium-transporting ATPase KdpC subunit.